Consider the following 518-residue polypeptide: Protein nucleotidyltransferase YdiU (518 aa).

Glycine 100, glycine 102, arginine 103, lysine 123, aspartate 135, glycine 136, arginine 193, and arginine 200 together coordinate ATP. Aspartate 270 functions as the Proton acceptor in the catalytic mechanism. Positions 271 and 280 each coordinate Mg(2+). Aspartate 280 provides a ligand contact to ATP.

Belongs to the SELO family. Mg(2+) serves as cofactor. It depends on Mn(2+) as a cofactor.

It carries out the reaction L-seryl-[protein] + ATP = 3-O-(5'-adenylyl)-L-seryl-[protein] + diphosphate. It catalyses the reaction L-threonyl-[protein] + ATP = 3-O-(5'-adenylyl)-L-threonyl-[protein] + diphosphate. The catalysed reaction is L-tyrosyl-[protein] + ATP = O-(5'-adenylyl)-L-tyrosyl-[protein] + diphosphate. The enzyme catalyses L-histidyl-[protein] + UTP = N(tele)-(5'-uridylyl)-L-histidyl-[protein] + diphosphate. It carries out the reaction L-seryl-[protein] + UTP = O-(5'-uridylyl)-L-seryl-[protein] + diphosphate. It catalyses the reaction L-tyrosyl-[protein] + UTP = O-(5'-uridylyl)-L-tyrosyl-[protein] + diphosphate. Its function is as follows. Nucleotidyltransferase involved in the post-translational modification of proteins. It can catalyze the addition of adenosine monophosphate (AMP) or uridine monophosphate (UMP) to a protein, resulting in modifications known as AMPylation and UMPylation. In Xanthomonas oryzae pv. oryzae (strain MAFF 311018), this protein is Protein nucleotidyltransferase YdiU.